A 1002-amino-acid chain; its full sequence is UPF0182 protein alr1037 (1002 aa).

9 helical membrane-spanning segments follow: residues Phe7–Glu29, Arg49–Ala71, Leu123–Gly145, Gln178–Ser200, Phe202–Ala224, Leu258–Leu280, His300–Ser319, Val339–Leu361, and Gly382–Val404.

The protein belongs to the UPF0182 family.

It is found in the cell membrane. The sequence is that of UPF0182 protein alr1037 from Nostoc sp. (strain PCC 7120 / SAG 25.82 / UTEX 2576).